Consider the following 359-residue polypeptide: Transcription factor MafA (359 aa).

Residue Ser-14 is modified to Phosphoserine. Residue Lys-32 forms a Glycyl lysine isopeptide (Lys-Gly) (interchain with G-Cter in SUMO2) linkage. 2 disordered regions span residues Arg-40–Ala-105 and Gly-172–His-226. Positions Pro-46–Pro-73 are enriched in low complexity. Ser-49 carries the phosphoserine modification. Residues Thr-53 and Thr-57 each carry the phosphothreonine modification. A phosphoserine mark is found at Ser-61 and Ser-65. Residues Gly-74 to Ser-84 are compositionally biased toward gly residues. The span at Gly-181 to Ser-209 shows a compositional bias: basic residues. Residues Gly-210–Gly-224 show a composition bias toward gly residues. The segment at Arg-260–Arg-285 is basic motif. Residues Arg-260–Leu-323 form the bZIP domain. A leucine-zipper region spans residues Leu-288 to Leu-309. Residues Lys-322–Leu-359 form a disordered region. A compositionally biased stretch (gly residues) spans Gly-325–Gly-336. Residues Pro-343 to Leu-359 show a composition bias toward low complexity.

It belongs to the bZIP family. Maf subfamily. As to quaternary structure, forms homodimers. Interacts with NEUROD1 and PDX1. May interact with MAFB, FOS, JUN and PCAF. Ubiquitinated, leading to its degradation by the proteasome. Post-translationally, phosphorylated at tyrosines. Expressed in brain, lung, spleen, pancreas and kidney. In the pancreas, expressed in the insulin-producing beta-cells of the islets of Langerhans (at protein level). Also expressed in the eye.

The protein localises to the nucleus. Transcriptional factor that activates insulin gene expression. Acts synergistically with NEUROD1/BETA2 and PDX1. Binds the insulin enhancer C1/RIPE3b element. Binds to consensus TRE-type MARE 5'-TGCTGACTCAGCA-3' DNA sequence. This chain is Transcription factor MafA (Mafa), found in Mus musculus (Mouse).